Reading from the N-terminus, the 1004-residue chain is Presequence protease, mitochondrial (1004 aa).

The N-terminal 34 residues, 1–34 (MLRNAAAGARKAVTELSQFPKPGEKLHGFTLVRS), are a transit peptide targeting the mitochondrion. Histidine 84 contributes to the Zn(2+) binding site. The active-site Proton acceptor is glutamate 87. Histidine 88 contributes to the Zn(2+) binding site. Glutamate 160 is a catalytic residue. Zn(2+) is bound at residue glutamate 188.

The protein belongs to the peptidase M16 family. PreP subfamily. Monomer and homodimer; homodimerization is induced by binding of the substrate. Zn(2+) serves as cofactor.

It is found in the mitochondrion intermembrane space. The protein localises to the mitochondrion matrix. Its function is as follows. Degrades mitochondrial transit peptides after their cleavage in the intermembrane space or in the matrix, and presequence peptides; clearance of these peptides is required to keep the presequence processing machinery running. Preferentially cleaves the N-terminal side of paired basic amino acid residues. Also degrades other unstructured peptides. May function as an ATP-dependent peptidase as opposed to a metalloendopeptidase. The chain is Presequence protease, mitochondrial (CYM1) from Gibberella zeae (strain ATCC MYA-4620 / CBS 123657 / FGSC 9075 / NRRL 31084 / PH-1) (Wheat head blight fungus).